Reading from the N-terminus, the 192-residue chain is MKLVAGLGNPEARYENTRHNIGFEVVDELARLHQSSFSSGKGNFLYSKIIHRNEPILLLKPMTYMNLSGNAVIAAMTFYKIEYQDILVVCDDLNIALGTIRMRAKGSAGGQNGLKHIIQCLKRDDFARLRVGIAPDHPVSSYSSFVLGKFNAEERKITDRMVSLSAEAALDFVAHGVEHAMNHYNTGKKTQQ.

Tyr14 contacts tRNA. The Proton acceptor role is filled by His19. TRNA contacts are provided by Tyr64, Asn66, and Asn112.

This sequence belongs to the PTH family. In terms of assembly, monomer.

The protein resides in the cytoplasm. The enzyme catalyses an N-acyl-L-alpha-aminoacyl-tRNA + H2O = an N-acyl-L-amino acid + a tRNA + H(+). Functionally, hydrolyzes ribosome-free peptidyl-tRNAs (with 1 or more amino acids incorporated), which drop off the ribosome during protein synthesis, or as a result of ribosome stalling. In terms of biological role, catalyzes the release of premature peptidyl moieties from peptidyl-tRNA molecules trapped in stalled 50S ribosomal subunits, and thus maintains levels of free tRNAs and 50S ribosomes. This chain is Peptidyl-tRNA hydrolase, found in Prosthecochloris aestuarii (strain DSM 271 / SK 413).